A 115-amino-acid polypeptide reads, in one-letter code: Large ribosomal subunit protein bL20 (115 aa).

Belongs to the bacterial ribosomal protein bL20 family.

Binds directly to 23S ribosomal RNA and is necessary for the in vitro assembly process of the 50S ribosomal subunit. It is not involved in the protein synthesizing functions of that subunit. This is Large ribosomal subunit protein bL20 from Prochlorococcus marinus (strain MIT 9215).